We begin with the raw amino-acid sequence, 698 residues long: Probable threonine--tRNA ligase 2, cytoplasmic (698 aa).

The TGS domain maps to 38–100; that stretch reads GGGNIKLNDG…EMSGKDYNIE (63 aa). Residues 541 to 560 form a disordered region; that stretch reads NNNNNNNNNNEEINDNNNNN.

Belongs to the class-II aminoacyl-tRNA synthetase family.

The protein localises to the cytoplasm. It carries out the reaction tRNA(Thr) + L-threonine + ATP = L-threonyl-tRNA(Thr) + AMP + diphosphate + H(+). This Dictyostelium discoideum (Social amoeba) protein is Probable threonine--tRNA ligase 2, cytoplasmic (thrS2).